The following is a 141-amino-acid chain: Large ribosomal subunit protein uL11 (141 aa).

Belongs to the universal ribosomal protein uL11 family. In terms of assembly, part of the ribosomal stalk of the 50S ribosomal subunit. Interacts with L10 and the large rRNA to form the base of the stalk. L10 forms an elongated spine to which L12 dimers bind in a sequential fashion forming a multimeric L10(L12)X complex. In terms of processing, one or more lysine residues are methylated.

Forms part of the ribosomal stalk which helps the ribosome interact with GTP-bound translation factors. This Dinoroseobacter shibae (strain DSM 16493 / NCIMB 14021 / DFL 12) protein is Large ribosomal subunit protein uL11.